A 422-amino-acid polypeptide reads, in one-letter code: Hexuronate transporter (422 aa).

11 consecutive transmembrane segments (helical) span residues 9-29, 45-65, 82-102, 141-161, 163-183, 219-239, 256-276, 294-314, 321-341, 356-376, and 381-401; these read VILF…ALSI, MGLI…LGGV, VWSL…LLII, TPLG…AFSW, VSFV…FKFV, LFTA…LTWF, VITV…GFVS, VVLV…GLVA, TLVA…WAVI, FMHF…GFIV, and TFSG…LAVI.

Belongs to the major facilitator superfamily. Phthalate permease family.

The protein resides in the cell membrane. The catalysed reaction is aldehydo-D-glucuronate(in) + H(+)(in) = aldehydo-D-glucuronate(out) + H(+)(out). It carries out the reaction aldehydo-D-galacturonate(out) + H(+)(out) = aldehydo-D-galacturonate(in) + H(+)(in). Transport of aldohexuronates such as D-glucuronate and D-galacturonate. The sequence is that of Hexuronate transporter from Bacillus subtilis (strain 168).